Consider the following 344-residue polypeptide: Fructose-bisphosphate aldolase (344 aa).

S53 lines the D-glyceraldehyde 3-phosphate pocket. The Proton donor role is filled by D95. Zn(2+)-binding residues include H96, D131, E161, and H212. Dihydroxyacetone phosphate is bound at residue G213. Position 252 (H252) interacts with Zn(2+). Residues 253–255 (GGS) and 274–277 (NVDT) each bind dihydroxyacetone phosphate.

This sequence belongs to the class II fructose-bisphosphate aldolase family. The cofactor is Zn(2+).

It carries out the reaction beta-D-fructose 1,6-bisphosphate = D-glyceraldehyde 3-phosphate + dihydroxyacetone phosphate. It participates in carbohydrate degradation; glycolysis; D-glyceraldehyde 3-phosphate and glycerone phosphate from D-glucose: step 4/4. Functionally, catalyzes the aldol condensation of dihydroxyacetone phosphate (DHAP or glycerone-phosphate) with glyceraldehyde 3-phosphate (G3P) to form fructose 1,6-bisphosphate (FBP) in gluconeogenesis and the reverse reaction in glycolysis. The sequence is that of Fructose-bisphosphate aldolase (fba) from Mycobacterium bovis (strain ATCC BAA-935 / AF2122/97).